The following is a 78-amino-acid chain: Large ribosomal subunit protein uL29 (78 aa).

Belongs to the universal ribosomal protein uL29 family.

The sequence is that of Large ribosomal subunit protein uL29 from Rhodococcus opacus (strain B4).